The sequence spans 603 residues: DNA mismatch repair protein MutL (603 aa).

The segment covering 336–346 (EVSKKQKEQQK) has biased composition (basic and acidic residues). 2 disordered regions span residues 336–355 (EVSK…MSFE) and 361–384 (KETP…DTSR).

It belongs to the DNA mismatch repair MutL/HexB family.

This protein is involved in the repair of mismatches in DNA. It is required for dam-dependent methyl-directed DNA mismatch repair. May act as a 'molecular matchmaker', a protein that promotes the formation of a stable complex between two or more DNA-binding proteins in an ATP-dependent manner without itself being part of a final effector complex. This chain is DNA mismatch repair protein MutL, found in Listeria welshimeri serovar 6b (strain ATCC 35897 / DSM 20650 / CCUG 15529 / CIP 8149 / NCTC 11857 / SLCC 5334 / V8).